The chain runs to 631 residues: Integrator complex subunit 10 (631 aa).

Over residues Phe545 to Arg570 the composition is skewed to polar residues. A disordered region spans residues Phe545–Asp577.

Belongs to the Integrator subunit 10 family. As to quaternary structure, belongs to the multiprotein complex Integrator, at least composed of IntS1, IntS2, IntS3, IntS4, omd/IntS5, IntS6, defl/IntS7, IntS8, IntS9, IntS10, IntS11, IntS12, asun/IntS13, IntS14 and IntS15. The core complex associates with protein phosphatase 2A subunits mts/PP2A and Pp2A-29B, to form the Integrator-PP2A (INTAC) complex.

Its subcellular location is the nucleus. Functionally, component of the integrator complex, a multiprotein complex that terminates RNA polymerase II (Pol II) transcription in the promoter-proximal region of genes. The integrator complex provides a quality checkpoint during transcription elongation by driving premature transcription termination of transcripts that are unfavorably configured for transcriptional elongation: the complex terminates transcription by (1) catalyzing dephosphorylation of the C-terminal domain (CTD) of Pol II subunit Polr2A/Rbp1 and Spt5, and (2) degrading the exiting nascent RNA transcript via endonuclease activity. The integrator complex is also involved in the 3'-end processing of the U7 snRNA, and also the spliceosomal snRNAs U1, U2, U4 and U5. This is Integrator complex subunit 10 from Drosophila melanogaster (Fruit fly).